The chain runs to 501 residues: Glutamyl-tRNA(Gln) amidotransferase subunit A (501 aa).

Active-site charge relay system residues include Lys80 and Ser155. Ser179 (acyl-ester intermediate) is an active-site residue.

It belongs to the amidase family. GatA subfamily. In terms of assembly, heterotrimer of A, B and C subunits.

The enzyme catalyses L-glutamyl-tRNA(Gln) + L-glutamine + ATP + H2O = L-glutaminyl-tRNA(Gln) + L-glutamate + ADP + phosphate + H(+). Its function is as follows. Allows the formation of correctly charged Gln-tRNA(Gln) through the transamidation of misacylated Glu-tRNA(Gln) in organisms which lack glutaminyl-tRNA synthetase. The reaction takes place in the presence of glutamine and ATP through an activated gamma-phospho-Glu-tRNA(Gln). In Cupriavidus necator (strain ATCC 17699 / DSM 428 / KCTC 22496 / NCIMB 10442 / H16 / Stanier 337) (Ralstonia eutropha), this protein is Glutamyl-tRNA(Gln) amidotransferase subunit A.